Consider the following 126-residue polypeptide: Putative esterase ComA2 (126 aa).

The protein belongs to the thioesterase PaaI family.

Its function is as follows. Is not required for competence. This chain is Putative esterase ComA2 (yuxO), found in Bacillus subtilis (strain 168).